A 370-amino-acid chain; its full sequence is DNA replication and repair protein RecF (370 aa).

Residue 30–37 (GENAQGKT) coordinates ATP.

It belongs to the RecF family.

It is found in the cytoplasm. The RecF protein is involved in DNA metabolism; it is required for DNA replication and normal SOS inducibility. RecF binds preferentially to single-stranded, linear DNA. It also seems to bind ATP. The sequence is that of DNA replication and repair protein RecF from Bacillus pumilus (strain SAFR-032).